We begin with the raw amino-acid sequence, 31 residues long: Electron transfer flavoprotein-ubiquinone oxidoreductase (31 aa).

Val11–Ile25 serves as a coordination point for FAD.

In terms of assembly, monomer. Requires [4Fe-4S] cluster as cofactor. The cofactor is FAD.

It catalyses the reaction a ubiquinone + reduced [electron-transfer flavoprotein] = a ubiquinol + oxidized [electron-transfer flavoprotein] + H(+). Functionally, accepts electrons from ETF and reduces ubiquinone. This Paracoccus denitrificans protein is Electron transfer flavoprotein-ubiquinone oxidoreductase.